The sequence spans 288 residues: MCTLANRSFAKMNGIGNEIVVLDLRDDPVAVTAAAARAIASQVPYDQLMVLQPPRAAGTAAFIRIYNNDGSESNACGNGMRCVAKQVFSGTDASALAFESRAGLLQCWRGAAPDIYTVDMGVPKFGWQDIPLAEEFRDTRMIELQIGPIDAPLLHTPSAVSMGNPHAIFWVDDVHAHDLGRFGPLLENHPIFPERANITLAHIVDRTHIVIRTWERGVGLTKACGSAACATAVAAVRLKRAERQVQISLPGGDLTIDWREADDHVLMTGGASFEFEGTLDPALFAGAA.

Positions 17, 47, and 67 each coordinate substrate. C76 acts as the Proton donor in catalysis. Residues G77–N78, N164, N197, and E215–R216 contribute to the substrate site. C224 (proton acceptor) is an active-site residue. A substrate-binding site is contributed by G225–S226.

Belongs to the diaminopimelate epimerase family. As to quaternary structure, homodimer.

It is found in the cytoplasm. It catalyses the reaction (2S,6S)-2,6-diaminopimelate = meso-2,6-diaminopimelate. It participates in amino-acid biosynthesis; L-lysine biosynthesis via DAP pathway; DL-2,6-diaminopimelate from LL-2,6-diaminopimelate: step 1/1. Functionally, catalyzes the stereoinversion of LL-2,6-diaminopimelate (L,L-DAP) to meso-diaminopimelate (meso-DAP), a precursor of L-lysine and an essential component of the bacterial peptidoglycan. In Rhodopseudomonas palustris (strain BisA53), this protein is Diaminopimelate epimerase.